Consider the following 174-residue polypeptide: MEESGDTCELTIVIMTVHAVMLESGFVLFDPDSSMRFSFSKKTLVSLNYTLPSVKGIVGLNFEKEAIVGSFVRVVSIDKRSYVHIVDLLMETLKSDEEEDTLSIDCKVLVWWRMIKDGIVTPLLVDLCYKTGLELPPCFISLPRELKHKILESLPGVDIGTLACVSSELRDMAS.

The 39-residue stretch at 136–174 (PPCFISLPRELKHKILESLPGVDIGTLACVSSELRDMAS) folds into the F-box domain.

This chain is F-box protein At1g70360, found in Arabidopsis thaliana (Mouse-ear cress).